The following is a 124-amino-acid chain: Fluoride-specific ion channel FluC (124 aa).

Transmembrane regions (helical) follow at residues 5 to 25 (ILAV…AGTW), 38 to 58 (TLAV…WFLL), 69 to 89 (GLIV…LDTL), and 97 to 117 (ALIA…ATWA). Residues glycine 76 and threonine 79 each contribute to the Na(+) site.

The protein belongs to the fluoride channel Fluc/FEX (TC 1.A.43) family.

Its subcellular location is the cell inner membrane. The enzyme catalyses fluoride(in) = fluoride(out). Its activity is regulated as follows. Na(+) is not transported, but it plays an essential structural role and its presence is essential for fluoride channel function. Its function is as follows. Fluoride-specific ion channel. Important for reducing fluoride concentration in the cell, thus reducing its toxicity. In Pseudomonas fluorescens (strain SBW25), this protein is Fluoride-specific ion channel FluC.